The primary structure comprises 250 residues: Small ribosomal subunit protein uS2 (250 aa).

The protein belongs to the universal ribosomal protein uS2 family.

This Chloroherpeton thalassium (strain ATCC 35110 / GB-78) protein is Small ribosomal subunit protein uS2.